The following is a 340-amino-acid chain: NADH-quinone oxidoreductase subunit H (340 aa).

The next 9 helical transmembrane spans lie at 9 to 29, 81 to 101, 113 to 133, 158 to 178, 184 to 204, 221 to 240, 245 to 264, 273 to 293, and 316 to 336; these read IWIIIKIVLILVPLLVAVAFI, LIAPILSLVPALAAWAVIPFA, LLFLFAMTSLGVYGILVAGWA, GFALVGVLLAAGTMNLQGIVL, LWHWFWLPLLPLFVTYWITAV, IVAGFHVEYAGVTFALFFLA, MVLVSAIATVIFLGGWLSPF, LFAWVPGIVWFVLKLSLFIFT, and VLIPVTLVWIIILALAIEFHW.

Belongs to the complex I subunit 1 family. NDH-1 is composed of 14 different subunits. Subunits NuoA, H, J, K, L, M, N constitute the membrane sector of the complex.

It localises to the cell inner membrane. It carries out the reaction a quinone + NADH + 5 H(+)(in) = a quinol + NAD(+) + 4 H(+)(out). NDH-1 shuttles electrons from NADH, via FMN and iron-sulfur (Fe-S) centers, to quinones in the respiratory chain. The immediate electron acceptor for the enzyme in this species is believed to be ubiquinone. Couples the redox reaction to proton translocation (for every two electrons transferred, four hydrogen ions are translocated across the cytoplasmic membrane), and thus conserves the redox energy in a proton gradient. This subunit may bind ubiquinone. This chain is NADH-quinone oxidoreductase subunit H, found in Coxiella burnetii (strain CbuK_Q154) (Coxiella burnetii (strain Q154)).